Reading from the N-terminus, the 216-residue chain is Ribosomal RNA small subunit methyltransferase G (216 aa).

S-adenosyl-L-methionine-binding positions include Gly73, Leu78, 124 to 125 (AE), and Arg139.

The protein belongs to the methyltransferase superfamily. RNA methyltransferase RsmG family.

The protein resides in the cytoplasm. Specifically methylates the N7 position of guanine in position 518 of 16S rRNA. The protein is Ribosomal RNA small subunit methyltransferase G of Arthrobacter sp. (strain FB24).